Reading from the N-terminus, the 161-residue chain is ATP synthase subunit b 1 (161 aa).

The helical transmembrane segment at 6-26 (ETWVAIAFVILMVVFGYLGVF) threads the bilayer.

The protein belongs to the ATPase B chain family. As to quaternary structure, F-type ATPases have 2 components, F(1) - the catalytic core - and F(0) - the membrane proton channel. F(1) has five subunits: alpha(3), beta(3), gamma(1), delta(1), epsilon(1). F(0) has three main subunits: a(1), b(2) and c(10-14). The alpha and beta chains form an alternating ring which encloses part of the gamma chain. F(1) is attached to F(0) by a central stalk formed by the gamma and epsilon chains, while a peripheral stalk is formed by the delta and b chains.

The protein localises to the cell inner membrane. In terms of biological role, f(1)F(0) ATP synthase produces ATP from ADP in the presence of a proton or sodium gradient. F-type ATPases consist of two structural domains, F(1) containing the extramembraneous catalytic core and F(0) containing the membrane proton channel, linked together by a central stalk and a peripheral stalk. During catalysis, ATP synthesis in the catalytic domain of F(1) is coupled via a rotary mechanism of the central stalk subunits to proton translocation. Its function is as follows. Component of the F(0) channel, it forms part of the peripheral stalk, linking F(1) to F(0). This chain is ATP synthase subunit b 1, found in Bradyrhizobium diazoefficiens (strain JCM 10833 / BCRC 13528 / IAM 13628 / NBRC 14792 / USDA 110).